The chain runs to 138 residues: Ribosome-binding factor A (138 aa).

Belongs to the RbfA family. As to quaternary structure, monomer. Binds 30S ribosomal subunits, but not 50S ribosomal subunits or 70S ribosomes.

The protein resides in the cytoplasm. Its function is as follows. One of several proteins that assist in the late maturation steps of the functional core of the 30S ribosomal subunit. Associates with free 30S ribosomal subunits (but not with 30S subunits that are part of 70S ribosomes or polysomes). Required for efficient processing of 16S rRNA. May interact with the 5'-terminal helix region of 16S rRNA. The protein is Ribosome-binding factor A of Sodalis glossinidius (strain morsitans).